Consider the following 188-residue polypeptide: MAKVLATEIRVGNLIEWDKRIWRVLKCYHVHVGGRGGAFMQVEMKDIEAGTKTNQRIRTEDKVERAFVEPREMTFLYQEGDNYIFMDKENYEQLSLSRDFLEGQYEYLLPNTDVQVNFHNDRAIGVQLPASVVLTITDTEPNLKGATATSSYKPATTETGLVVMVPPFVLQGERIKVNTDSGEYIERM.

It belongs to the elongation factor P family.

The protein localises to the cytoplasm. It functions in the pathway protein biosynthesis; polypeptide chain elongation. In terms of biological role, involved in peptide bond synthesis. Stimulates efficient translation and peptide-bond synthesis on native or reconstituted 70S ribosomes in vitro. Probably functions indirectly by altering the affinity of the ribosome for aminoacyl-tRNA, thus increasing their reactivity as acceptors for peptidyl transferase. In Nitrosospira multiformis (strain ATCC 25196 / NCIMB 11849 / C 71), this protein is Elongation factor P.